The following is a 3491-amino-acid chain: Erythronolide synthase EryA1 (3491 aa).

The segment at 1–484 (MSGPRSRTTS…TPRALAEALA (484 aa)) is loading domain. The segment at 57 to 372 (VFVFPGQGAQ…AAQAFTGGVA (316 aa)) is acyltransferase 1. S145 acts as the Acyl-ester intermediate; for acyltransferase 1 activity in catalysis. The interval 386–410 (PALCRSSRRPRRKTSRPSPASTGTR) is disordered. A compositionally biased stretch (basic residues) spans 391–400 (SSRRPRRKTS). The 76-residue stretch at 412–487 (RTCCERLLAV…ALAEALAAGT (76 aa)) folds into the Carrier 1 domain. S447 carries the post-translational modification O-(pantetheine 4'-phosphoryl)serine. The Ketosynthase family 3 (KS3) 1 domain occupies 504 to 928 (GEPVAVVAMA…GTNAHAIIEE (425 aa)). Module stretches follow at residues 507–1958 (VAVV…AHLA) and 1982–3404 (IAIV…GFLD). C677 functions as the Acyl-thioester intermediate; for beta-ketoacyl synthase 1 activity in the catalytic mechanism. Residues H812 and H850 each act as for beta-ketoacyl synthase 1 activity in the active site. The tract at residues 1031 to 1352 (VFVFPGQGWQ…ALSRAFAAGV (322 aa)) is acyltransferase 2. S1128 serves as the catalytic Acyl-ester intermediate; for acyltransferase 2 activity. The tract at residues 1613–1790 (GTVLVTGGTG…ATAVAWGTWA (178 aa)) is beta-ketoacyl reductase 1. NADP(+) is bound by residues 1621–1624 (TGGV), 1644–1647 (SRSG), 1673–1674 (DV), K1723, and 1745–1746 (FS). Y1760 acts as the For beta-ketoacyl reductase 1 activity in catalysis. Residues 1886–1961 (EALFELVRSH…TLAAHLAAEL (76 aa)) form the Carrier 2 domain. S1921 bears the O-(pantetheine 4'-phosphoryl)serine mark. In terms of domain architecture, Ketosynthase family 3 (KS3) 2 spans 1979–2402 (DEPIAIVGMA…GTNAHVIIAE (424 aa)). C2148 serves as the catalytic Acyl-thioester intermediate; for beta-ketoacyl synthase 2 activity. Catalysis depends on for beta-ketoacyl synthase 2 activity residues H2283 and H2323. The interval 2508–2827 (VFVFPGQGAQ…LADAHTRGVA (320 aa)) is acyltransferase 3. Residue S2598 is the Acyl-ester intermediate; for acyltransferase 3 activity of the active site. Positions 3057 to 3233 (GTILVTGGTA…ATSVAWGLWA (177 aa)) are beta-ketoacyl reductase 2. NADP(+)-binding positions include 3065–3068 (TAGL), 3088–3091 (SRRG), 3117–3118 (DV), K3168, and 3188–3189 (FS). Y3203 functions as the For beta-ketoacyl reductase 2 activity in the catalytic mechanism. One can recognise a Carrier 3 domain in the interval 3329 to 3407 (ERTAELVRLV…AVAGFLDAEL (79 aa)). At S3367 the chain carries O-(pantetheine 4'-phosphoryl)serine. Positions 3456–3491 (QAADASGTGANPSGDDLGEAGVDELLEALGRELDGD) are disordered. Residues 3471-3481 (DLGEAGVDELL) are compositionally biased toward acidic residues.

Homodimer. Erythronolide synthase is composed of EryAI, EryAII and EryAIII multimodular (2 modules) polypeptides each coding for a functional synthase subunit which participates in 2 of the six FAS-like elongation steps required for formation of the polyketide. Module 1, 2, 3, 4, 5, and 6 participating in biosynthesis steps 1, 2, 3, 4, 5, and 6, respectively. It depends on pantetheine 4'-phosphate as a cofactor.

The enzyme catalyses 6 (S)-methylmalonyl-CoA + propanoyl-CoA + 6 NADPH + 12 H(+) = 6-deoxyerythronolide B + 6 CO2 + 6 NADP(+) + 7 CoA + H2O. It participates in antibiotic biosynthesis; erythromycin biosynthesis. In terms of biological role, involved in the biosynthesis of antibiotic erythromycin via the biosynthesis of its aglycone precursor, 6-deoxyerythronolide B (6-dEB). The polypeptide is Erythronolide synthase EryA1 (eryA) (Saccharopolyspora erythraea (Streptomyces erythraeus)).